A 560-amino-acid polypeptide reads, in one-letter code: MSSNISAIPNSLEVIRRSAQFQASVWGDYFLSYHSLSPEKGNKVMEKQTEELKEEIKRELNSTTKDEEPEKLRLIDSIQRLGVCYHFEYEINKILEQLHHITITSKNNGDDHPYNMTLRFRLLRQQGYNISSKSFERFRGKWESSYDKNVEELLSLYEASQLRMRGEEALDEAFRFATAQLEAIVQDPTTDPTVVGEVCQALKWPMYKNLPRLQASHYIGLYSEKPWRNESLPNFAKMDFSKLQKLHQKEIAYISKWWDDYGFAEKLSFARNRIVEGYFFALGIFFEPQLSTARLIMTKIIAIGSVLDDIYDVYGTFEELKLLTLALERWDKSETKKLPKYMKMYYEALLDVFEEIEQEMSQKETTPYCIHQMKEATKELGRVFLVEAKWCKEGYTPTVEEYLDIALISFGHKLLMVTALLGMGSTIATQQIVQWITSMPNILKASAIICRLMNDIVSHKFEQERGHVASAIECYMEQNYMSEHDVLIILGKQIDEFWKDMVENYCVVITEEEVPRGVLMRVLNLTRLFNVIYKDGDGYTQSHGSTKTHIKSLLVDSLPL.

3 residues coordinate Mg(2+): D308, D312, and E462. A DDXXD motif motif is present at residues D308–D312.

It belongs to the terpene synthase family. Tpsa subfamily. The cofactor is Mg(2+). As to expression, expressed in the rind tissues of ripe fruits.

The protein resides in the cytoplasm. The enzyme catalyses (2E,6E)-farnesyl diphosphate = (3E,6E)-alpha-farnesene + diphosphate. It participates in secondary metabolite biosynthesis; terpenoid biosynthesis. In terms of biological role, sesquiterpene synthase producing exclusively alpha-farnesene. Associated with the production of sesquiterpenes responsible for the aroma of the fruit. This is Alpha-farnesene synthase from Cucumis melo (Muskmelon).